The primary structure comprises 148 residues: Flavodoxin (148 aa).

The 142-residue stretch at 4 to 145 folds into the Flavodoxin-like domain; the sequence is VLILFGSSTG…AVSAFAEDVL (142 aa).

The protein belongs to the flavodoxin family. The cofactor is FMN.

In terms of biological role, low-potential electron donor to a number of redox enzymes. The chain is Flavodoxin from Desulfovibrio desulfuricans (strain ATCC 27774 / DSM 6949 / MB).